Consider the following 518-residue polypeptide: Cytochrome P450 3A27 (518 aa).

C447 is a heme binding site.

Belongs to the cytochrome P450 family. It depends on heme as a cofactor.

It localises to the endoplasmic reticulum membrane. The protein resides in the microsome membrane. It catalyses the reaction an organic molecule + reduced [NADPH--hemoprotein reductase] + O2 = an alcohol + oxidized [NADPH--hemoprotein reductase] + H2O + H(+). Functionally, cytochromes P450 are a group of heme-thiolate monooxygenases. In liver microsomes, this enzyme is involved in an NADPH-dependent electron transport pathway. It oxidizes a variety of structurally unrelated compounds, including steroids, fatty acids, and xenobiotics. This is Cytochrome P450 3A27 (cyp3a27) from Oncorhynchus mykiss (Rainbow trout).